We begin with the raw amino-acid sequence, 206 residues long: Dephospho-CoA kinase (206 aa).

In terms of domain architecture, DPCK spans 4–204 (IVGLTGGIGS…QFYLQQAENK (201 aa)). 12-17 (GSGKTT) contributes to the ATP binding site.

Belongs to the CoaE family.

It is found in the cytoplasm. The catalysed reaction is 3'-dephospho-CoA + ATP = ADP + CoA + H(+). It functions in the pathway cofactor biosynthesis; coenzyme A biosynthesis; CoA from (R)-pantothenate: step 5/5. Its function is as follows. Catalyzes the phosphorylation of the 3'-hydroxyl group of dephosphocoenzyme A to form coenzyme A. In Haemophilus influenzae (strain 86-028NP), this protein is Dephospho-CoA kinase.